Consider the following 274-residue polypeptide: Factor H binding protein (274 aa).

The N-terminal stretch at 1 to 19 is a signal peptide; it reads MNRTAFCCLSLTTALILTA. Residue C20 is the site of N-palmitoyl cysteine attachment. C20 is lipidated: S-diacylglycerol cysteine. Residues 27–119 form a domain A region; the sequence is VAADIGAGLA…LESGEFQVYK (93 aa). Positions 120–183 are domain B; it reads QSHSALTAFQ…TAFGSDDAGG (64 aa). A domain C region spans residues 184–274; the sequence is KLTYTIDFAA…IRHIGLAAKQ (91 aa).

The protein belongs to the factor H binding-protein family. In terms of assembly, binds to host factor H (fH from human). Both fHbp beta-barrels contact Sushi domains 6 and 7 in fH (also called complement control protein domains, CCP). This interaction probably mimics the normal (carbohydrate-dependent) mode of fH recruitement, regulating fH activity. Sucrose octasulphate inhibits the fHbp-fH interaction. In terms of processing, protein is lipidated in N.meningitidis upon growth in radioactive palmitic acid, probably on Cys-20.

The protein localises to the cell outer membrane. It is found in the secreted. It localises to the extracellular vesicle. Its subcellular location is the bacterial extracellular vesicle. In terms of biological role, a bacterial surface lipoprotein that binds host (human) complement factor H (fH, gene CFH), binding contributes to the avoidance of complement-mediated lysis by N.meningitidis. Binding of fH to the bacteria surface is independent of bacterial sialic acid moieties. fH binding affinity is high enough that it may sequester plasma fH, depleting its circulating levels and de-regulating complement in the host. This protein induces high levels of bactericidal antibodies in mice. The sequence is that of Factor H binding protein (fhbP) from Neisseria meningitidis serogroup B (strain ATCC BAA-335 / MC58).